Reading from the N-terminus, the 523-residue chain is Light-independent protochlorophyllide reductase subunit B (523 aa).

Aspartate 36 contacts [4Fe-4S] cluster. Aspartate 290 serves as the catalytic Proton donor. Glycine 425 to leucine 426 is a binding site for substrate.

This sequence belongs to the ChlB/BchB/BchZ family. Protochlorophyllide reductase is composed of three subunits; ChlL, ChlN and ChlB. Forms a heterotetramer of two ChlB and two ChlN subunits. Requires [4Fe-4S] cluster as cofactor.

It carries out the reaction chlorophyllide a + oxidized 2[4Fe-4S]-[ferredoxin] + 2 ADP + 2 phosphate = protochlorophyllide a + reduced 2[4Fe-4S]-[ferredoxin] + 2 ATP + 2 H2O. It functions in the pathway porphyrin-containing compound metabolism; chlorophyll biosynthesis (light-independent). Functionally, component of the dark-operative protochlorophyllide reductase (DPOR) that uses Mg-ATP and reduced ferredoxin to reduce ring D of protochlorophyllide (Pchlide) to form chlorophyllide a (Chlide). This reaction is light-independent. The NB-protein (ChlN-ChlB) is the catalytic component of the complex. The protein is Light-independent protochlorophyllide reductase subunit B of Prochlorococcus marinus (strain MIT 9301).